Reading from the N-terminus, the 139-residue chain is Small ribosomal subunit protein eS12 (139 aa).

The protein belongs to the eukaryotic ribosomal protein eS12 family. In terms of assembly, subunit of the 40S ribosomal complex. Part of the small subunit (SSU) processome, composed of more than 70 proteins and the RNA chaperone small nucleolar RNA (snoRNA) U3.

It is found in the nucleus. Its subcellular location is the nucleolus. Subunit of the 40S ribosomal complex. Part of the small subunit (SSU) processome, first precursor of the small eukaryotic ribosomal subunit. During the assembly of the SSU processome in the nucleolus, many ribosome biogenesis factors, an RNA chaperone and ribosomal proteins associate with the nascent pre-rRNA and work in concert to generate RNA folding, modifications, rearrangements and cleavage as well as targeted degradation of pre-ribosomal RNA by the RNA exosome. In wing imaginal disks, might have a role in translation rate, growth and cell competition, probably through regulation of Xrp1 expression. Might have a role in development and longevity. This Drosophila melanogaster (Fruit fly) protein is Small ribosomal subunit protein eS12.